Here is a 557-residue protein sequence, read N- to C-terminus: Dihydroxy-acid dehydratase (557 aa).

Asp-78 is a binding site for Mg(2+). Cys-119 contributes to the [2Fe-2S] cluster binding site. 2 residues coordinate Mg(2+): Asp-120 and Lys-121. Lys-121 carries the N6-carboxylysine modification. A [2Fe-2S] cluster-binding site is contributed by Cys-192. Glu-442 is a binding site for Mg(2+). Residue Ser-468 is the Proton acceptor of the active site.

This sequence belongs to the IlvD/Edd family. Homodimer. Requires [2Fe-2S] cluster as cofactor. Mg(2+) serves as cofactor.

It catalyses the reaction (2R)-2,3-dihydroxy-3-methylbutanoate = 3-methyl-2-oxobutanoate + H2O. It carries out the reaction (2R,3R)-2,3-dihydroxy-3-methylpentanoate = (S)-3-methyl-2-oxopentanoate + H2O. Its pathway is amino-acid biosynthesis; L-isoleucine biosynthesis; L-isoleucine from 2-oxobutanoate: step 3/4. It functions in the pathway amino-acid biosynthesis; L-valine biosynthesis; L-valine from pyruvate: step 3/4. Functionally, functions in the biosynthesis of branched-chain amino acids. Catalyzes the dehydration of (2R,3R)-2,3-dihydroxy-3-methylpentanoate (2,3-dihydroxy-3-methylvalerate) into 2-oxo-3-methylpentanoate (2-oxo-3-methylvalerate) and of (2R)-2,3-dihydroxy-3-methylbutanoate (2,3-dihydroxyisovalerate) into 2-oxo-3-methylbutanoate (2-oxoisovalerate), the penultimate precursor to L-isoleucine and L-valine, respectively. The polypeptide is Dihydroxy-acid dehydratase (Bacillus cereus (strain ATCC 10987 / NRS 248)).